The following is a 117-amino-acid chain: Cuticle protein CP1243 (117 aa).

Repeat copies occupy residues 1–17, 26–43, 67–84, and 93–110.

In terms of tissue distribution, calcified shell.

The chain is Cuticle protein CP1243 from Cancer pagurus (Rock crab).